Consider the following 317-residue polypeptide: Brain-specific serine protease 4 (317 aa).

An N-terminal signal peptide occupies residues 1–32 (MVVSGAPPALGGGCLGTFTSLLLLASTAILNA). Residues 50–290 (VVGGEDSTDS…HRSWVEKIVQ (241 aa)) enclose the Peptidase S1 domain. An N-linked (GlcNAc...) asparagine glycan is attached at asparagine 70. Residues cysteine 75 and cysteine 91 are joined by a disulfide bond. Catalysis depends on charge relay system residues histidine 90 and aspartate 141. Disulfide bonds link cysteine 175-cysteine 248, cysteine 208-cysteine 227, and cysteine 238-cysteine 266. Residue serine 242 is the Charge relay system of the active site.

Belongs to the peptidase S1 family. In terms of tissue distribution, expressed abundantly in the epithelial cells of the airways, including trachea, esophagus and fetal lung. Scarce in adult lung. Expressed at low levels in placenta, pancreas, prostate and thyroid gland.

Its subcellular location is the secreted. Preferentially cleaves the synthetic substrate H-D-Leu-Thr-Arg-pNA compared to tosyl-Gly-Pro-Arg-pNA. This is Brain-specific serine protease 4 (PRSS22) from Homo sapiens (Human).